The sequence spans 570 residues: Adenine deaminase 2 (570 aa).

The protein belongs to the metallo-dependent hydrolases superfamily. Adenine deaminase family. Mn(2+) serves as cofactor.

The enzyme catalyses adenine + H2O + H(+) = hypoxanthine + NH4(+). This is Adenine deaminase 2 from Carboxydothermus hydrogenoformans (strain ATCC BAA-161 / DSM 6008 / Z-2901).